A 323-amino-acid chain; its full sequence is Cytochrome c biogenesis protein CcsA (323 aa).

The next 8 helical transmembrane spans lie at 9–29 (ILTHISFSVISIVITIQLITL), 37–57 (LYVSSEKGMIATFFCITGLLV), 71–91 (LYESLLFLSWAFSIIHLFTYF), 100–120 (VSAITAPSTIFTQGFATSGFL), 145–165 (MVLGYAALLCGSLFSVALIVI), 227–247 (IISLGFIFLSIGILSGAVWAN), 261–275 (TWAFITWTIFAIYLH), and 288–308 (AIVASMGFLIIWICYFGVNLL).

The protein belongs to the CcmF/CycK/Ccl1/NrfE/CcsA family. May interact with Ccs1.

It localises to the plastid. The protein resides in the chloroplast thylakoid membrane. Its function is as follows. Required during biogenesis of c-type cytochromes (cytochrome c6 and cytochrome f) at the step of heme attachment. The chain is Cytochrome c biogenesis protein CcsA from Cucumis sativus (Cucumber).